The chain runs to 600 residues: Prostaglandin G/H synthase 1 (600 aa).

Residues 1–24 form the signal peptide; sequence MSRQGISLRFPLLLLLLSPSPVLP. In terms of domain architecture, EGF-like spans 32-70; sequence PVNPCCYYPCQHQGICVRFGLDRYQCDCTRTGYYGPNCT. 4 disulfides stabilise this stretch: Cys-36–Cys-47, Cys-37–Cys-159, Cys-41–Cys-57, and Cys-59–Cys-69. Residues Asn-68, Asn-104, and Asn-144 are each glycosylated (N-linked (GlcNAc...) asparagine). Residue His-207 is the Proton acceptor of the active site. Catalysis depends on Tyr-385, which acts as the For cyclooxygenase activity. His-388 contributes to the heme b binding site. Asn-410 carries an N-linked (GlcNAc...) asparagine glycan. An intrachain disulfide couples Cys-569 to Cys-575.

It belongs to the prostaglandin G/H synthase family. In terms of assembly, homodimer. Requires heme b as cofactor.

It localises to the microsome membrane. It is found in the endoplasmic reticulum membrane. The enzyme catalyses (5Z,8Z,11Z,14Z)-eicosatetraenoate + AH2 + 2 O2 = prostaglandin H2 + A + H2O. It carries out the reaction (5Z,8Z,11Z,14Z)-eicosatetraenoate + 2 O2 = prostaglandin G2. It catalyses the reaction prostaglandin G2 + AH2 = prostaglandin H2 + A + H2O. The catalysed reaction is (9Z,12Z)-octadecadienoate + AH2 + O2 = (9R)-hydroxy-(10E,12Z)-octadecadienoate + A + H2O. The enzyme catalyses (9Z,12Z)-octadecadienoate + AH2 + O2 = (9S)-hydroxy-(10E,12Z)-octadecadienoate + A + H2O. It carries out the reaction (9Z,12Z)-octadecadienoate + AH2 + O2 = (13S)-hydroxy-(9Z,11E)-octadecadienoate + A + H2O. It catalyses the reaction (9Z,12Z)-octadecadienoate + AH2 + O2 = (13R)-hydroxy-(9Z,11E)-octadecadienoate + A + H2O. It functions in the pathway lipid metabolism; prostaglandin biosynthesis. With respect to regulation, the cyclooxygenase activity is inhibited by nonsteroidal anti-inflammatory drugs (NSAIDs) including ibuprofen, flurbiprofen, ketoprofen, naproxen, flurbiprofen, anirolac, fenclofenac and diclofenac. Functionally, dual cyclooxygenase and peroxidase that plays an important role in the biosynthesis pathway of prostanoids, a class of C20 oxylipins mainly derived from arachidonate ((5Z,8Z,11Z,14Z)-eicosatetraenoate, AA, C20:4(n-6)), with a particular role in the inflammatory response. The cyclooxygenase activity oxygenates AA to the hydroperoxy endoperoxide prostaglandin G2 (PGG2), and the peroxidase activity reduces PGG2 to the hydroxy endoperoxide prostaglandin H2 (PGH2), the precursor of all 2-series prostaglandins and thromboxanes. This complex transformation is initiated by abstraction of hydrogen at carbon 13 (with S-stereochemistry), followed by insertion of molecular O2 to form the endoperoxide bridge between carbon 9 and 11 that defines prostaglandins. The insertion of a second molecule of O2 (bis-oxygenase activity) yields a hydroperoxy group in PGG2 that is then reduced to PGH2 by two electrons. Involved in the constitutive production of prostanoids in particular in the stomach and platelets. In gastric epithelial cells, it is a key step in the generation of prostaglandins, such as prostaglandin E2 (PGE2), which plays an important role in cytoprotection. In platelets, it is involved in the generation of thromboxane A2 (TXA2), which promotes platelet activation and aggregation, vasoconstriction and proliferation of vascular smooth muscle cells. Can also use linoleate (LA, (9Z,12Z)-octadecadienoate, C18:2(n-6)) as substrate and produce hydroxyoctadecadienoates (HODEs) in a regio- and stereospecific manner, being (9R)-HODE ((9R)-hydroxy-(10E,12Z)-octadecadienoate) and (13S)-HODE ((13S)-hydroxy-(9Z,11E)-octadecadienoate) its major products. The polypeptide is Prostaglandin G/H synthase 1 (PTGS1) (Bos taurus (Bovine)).